Reading from the N-terminus, the 357-residue chain is MSEEDNRLNELFANDLGVQPPCERSLKEGRRFLNDFEIAAKKKLLELERKALEDKEKNLNFVVESERTLFNSKKRAFDNDECYNDRCKLFRGIVNEWGRSERTLDSLDEPPAWFRREMGEWKKAREEDKAEWKKAREEDKAEWKKAREEDKAEWKKAREEDKAEWKKAREEDKAEWKKAREEDKEWRNSMDEWRKSMDEWRKSMDEWRKSMDEWRKSTDEWRKSTDERLENLLNIVREILDVQRDMRNDLSNLTRKVDRMDMRLSRNNNMIMRSFAQPITEVPFFNGDIPDPNLPRITRIEDIDSLSEENCTRYLKGYGVSYDENDQSLWKRQLAKAVGLTAAYDESYTFSPFSSSE.

This sequence belongs to the UPF0612 family.

Its subcellular location is the nucleus. In terms of biological role, has a role in meiosis. This Schizosaccharomyces pombe (strain 972 / ATCC 24843) (Fission yeast) protein is Meiotically up-regulated gene 135 protein (mug135).